The sequence spans 423 residues: Gamma-glutamyl phosphate reductase (423 aa).

Belongs to the gamma-glutamyl phosphate reductase family.

Its subcellular location is the cytoplasm. The catalysed reaction is L-glutamate 5-semialdehyde + phosphate + NADP(+) = L-glutamyl 5-phosphate + NADPH + H(+). Its pathway is amino-acid biosynthesis; L-proline biosynthesis; L-glutamate 5-semialdehyde from L-glutamate: step 2/2. Functionally, catalyzes the NADPH-dependent reduction of L-glutamate 5-phosphate into L-glutamate 5-semialdehyde and phosphate. The product spontaneously undergoes cyclization to form 1-pyrroline-5-carboxylate. The protein is Gamma-glutamyl phosphate reductase of Pseudomonas putida (strain W619).